The primary structure comprises 71 residues: High-potential iron-sulfur protein (71 aa).

The residue at position 1 (Gln1) is a Pyrrolidone carboxylic acid. The [4Fe-4S] cluster site is built by Cys37, Cys40, Cys50, and Cys64.

This sequence belongs to the high-potential iron-sulfur protein (HiPIP) family. As to quaternary structure, homodimer.

Functionally, specific class of high-redox-potential 4Fe-4S ferredoxins. Functions in anaerobic electron transport in most purple and in some other photosynthetic bacteria and in at least one genus (Paracoccus) of halophilic, denitrifying bacteria. The protein is High-potential iron-sulfur protein (hip) of Halomonas halodenitrificans (strain ATCC 12084 / NCIMB 8669) (Paracoccus halodenitrificans).